The chain runs to 1079 residues: Tudor domain-containing protein 7A (1079 aa).

Residues 3-76 (DVELVKKMLR…TGEVMCFAGV (74 aa)) enclose the HTH OST-type 1 domain. The disordered stretch occupies residues 153–175 (LPSSRAPAWQMNRKSPVPEKTSV). 2 consecutive HTH OST-type domains span residues 205–270 (DVEL…RLVY) and 366–434 (LTTE…ILYT). 2 consecutive Tudor domains span residues 519–576 (SPKI…FMTL) and 708–765 (RPFC…FLKE).

Belongs to the TDRD7 family.

It is found in the cytoplasm. In terms of biological role, component of specific cytoplasmic RNA granules involved in post-transcriptional regulation of specific genes: probably acts by binding to specific mRNAs and regulating their translation. Probably required during spermatogenesis. Required for structural integrity of granules in primordial germ cells (PGCs). The sequence is that of Tudor domain-containing protein 7A (tdrd7a) from Danio rerio (Zebrafish).